The sequence spans 298 residues: UDP-3-O-acyl-N-acetylglucosamine deacetylase (298 aa).

Zn(2+) contacts are provided by His80, His239, and Asp243. Catalysis depends on His266, which acts as the Proton donor.

It belongs to the LpxC family. The cofactor is Zn(2+).

The enzyme catalyses a UDP-3-O-[(3R)-3-hydroxyacyl]-N-acetyl-alpha-D-glucosamine + H2O = a UDP-3-O-[(3R)-3-hydroxyacyl]-alpha-D-glucosamine + acetate. Its pathway is glycolipid biosynthesis; lipid IV(A) biosynthesis; lipid IV(A) from (3R)-3-hydroxytetradecanoyl-[acyl-carrier-protein] and UDP-N-acetyl-alpha-D-glucosamine: step 2/6. Catalyzes the hydrolysis of UDP-3-O-myristoyl-N-acetylglucosamine to form UDP-3-O-myristoylglucosamine and acetate, the committed step in lipid A biosynthesis. This is UDP-3-O-acyl-N-acetylglucosamine deacetylase from Blochmanniella floridana.